Here is a 120-residue protein sequence, read N- to C-terminus: NAD(P)H-quinone oxidoreductase subunit 3, chloroplastic (120 aa).

Transmembrane regions (helical) follow at residues 9–29, 64–84, and 88–108; these read IFWA…LISG, MFAL…PWAM, and VLGV…IVGS.

The protein belongs to the complex I subunit 3 family. In terms of assembly, NDH is composed of at least 16 different subunits, 5 of which are encoded in the nucleus.

The protein resides in the plastid. It localises to the chloroplast thylakoid membrane. It catalyses the reaction a plastoquinone + NADH + (n+1) H(+)(in) = a plastoquinol + NAD(+) + n H(+)(out). It carries out the reaction a plastoquinone + NADPH + (n+1) H(+)(in) = a plastoquinol + NADP(+) + n H(+)(out). NDH shuttles electrons from NAD(P)H:plastoquinone, via FMN and iron-sulfur (Fe-S) centers, to quinones in the photosynthetic chain and possibly in a chloroplast respiratory chain. The immediate electron acceptor for the enzyme in this species is believed to be plastoquinone. Couples the redox reaction to proton translocation, and thus conserves the redox energy in a proton gradient. In Calycanthus floridus var. glaucus (Eastern sweetshrub), this protein is NAD(P)H-quinone oxidoreductase subunit 3, chloroplastic.